The primary structure comprises 710 residues: Denticleless protein homolog A (710 aa).

WD repeat units lie at residues 47-89, 96-135, and 138-178; these read GMPV…MQRL, AHTN…LIGE, and GHQC…KDGF. Positions 168–171 match the DDB1-binding motif motif; the sequence is WDTR. Positions 197 to 204 match the Nuclear localization signal motif; it reads PSKMKKRK. WD repeat units follow at residues 215 to 254, 270 to 309, 314 to 355, and 359 to 398; these read DSQQ…SAYR, TRKL…TDPV, GHQN…AAPV, and GHCQ…CEDS. The DDB1-binding motif motif lies at 244–247; the sequence is WDLR. Disordered regions lie at residues 428–534 and 652–698; these read GKPS…VSSA and ALGH…PGSM. Residues 430-450 show a composition bias toward low complexity; that stretch reads PSVMSSSSLTSSPTPASCAPS. 2 stretches are compositionally biased toward polar residues: residues 504–516 and 659–690; these read TPKS…TKTP and SSPQ…SPVS.

It belongs to the WD repeat cdt2 family. As to quaternary structure, component of the DCX(DTL) E3 ubiquitin ligase complex, at least composed of cul4 (cul4a or cul4b), ddb1, dtl/cdt2 and rbx1.

It is found in the nucleus. Its subcellular location is the cytoplasm. The protein resides in the cytoskeleton. It localises to the microtubule organizing center. The protein localises to the centrosome. It is found in the chromosome. The protein operates within protein modification; protein ubiquitination. Its function is as follows. Substrate-specific adapter of a DCX (DDB1-CUL4-X-box) E3 ubiquitin-protein ligase complex required for cell cycle control, DNA damage response and translesion DNA synthesis. The DCX(DTL) complex, also named CRL4(CDT2) complex, mediates the polyubiquitination and subsequent degradation of CDT1, CDKN1A/p21(CIP1), KMT5A and SDE2. CDT1 degradation in response to DNA damage is necessary to ensure proper cell cycle regulation of DNA replication. CDKN1A/p21(CIP1) degradation during S phase or following UV irradiation is essential to control replication licensing. KMT5A degradation is also important for a proper regulation of mechanisms such as TGF-beta signaling, cell cycle progression, DNA repair and cell migration. Most substrates require their interaction with PCNA for their polyubiquitination: substrates interact with PCNA via their PIP-box, and those containing the 'K+4' motif in the PIP box, recruit the DCX(DTL) complex, leading to their degradation. In undamaged proliferating cells, the DCX(DTL) complex also promotes the 'Lys-164' monoubiquitination of PCNA, thereby being involved in PCNA-dependent translesion DNA synthesis. May play a role in the regulation of the circadian clock. This chain is Denticleless protein homolog A (dtl-a), found in Xenopus laevis (African clawed frog).